Reading from the N-terminus, the 215-residue chain is Protein NETWORKED 3B (215 aa).

Residues 5-90 (SKWWWIGANH…QKHDLLIKTS (86 aa)) form the NAB domain. The stretch at 134–165 (DETMKEELEILREENRVYKEKKEVVTRLLANL) forms a coiled coil.

It belongs to the NET family. In terms of assembly, interacts with F-actin.

In terms of biological role, plant-specific actin binding protein. May be part of a membrane-cytoskeletal adapter complex. This chain is Protein NETWORKED 3B, found in Arabidopsis thaliana (Mouse-ear cress).